The chain runs to 219 residues: Large ribosomal subunit protein uL3 (219 aa).

The interval 136-156 (GASHGAHRNHRKPGSIGGCAT) is disordered.

It belongs to the universal ribosomal protein uL3 family. Part of the 50S ribosomal subunit. Forms a cluster with proteins L14 and L19.

Its function is as follows. One of the primary rRNA binding proteins, it binds directly near the 3'-end of the 23S rRNA, where it nucleates assembly of the 50S subunit. In Kineococcus radiotolerans (strain ATCC BAA-149 / DSM 14245 / SRS30216), this protein is Large ribosomal subunit protein uL3.